Consider the following 77-residue polypeptide: Spermatid-specific protein T2 (77 aa).

A hydrophobic region spans residues 1–21; the sequence is MKVAANTSKMLVEKLDLLKGG. The disordered stretch occupies residues 1–77; it reads MKVAANTSKM…YSRRRYRRRR (77 aa). The span at 20-77 shows a compositional bias: basic residues; the sequence is GGRRRRRRSRRRRRSRRRRSRSPYRRRYRRRRRRRRSRRRRRYRRRRSYSRRRYRRRR.

In terms of processing, phosphorylation occurs at different degrees. The triphosphorylated form may be predominant in T2. SP2 appears to be phosphorylated in elongated spermatids, but dephosphorylated in mature sperm cells. In terms of tissue distribution, testis.

The protein localises to the nucleus. It is found in the chromosome. Cuttlefish spermiogenesis is characterized by a double nuclear protein transition: histones -&gt; spermatid-specific proteins (T1/T2) -&gt; protamines (SP1/SP2). The protamines compact sperm DNA into a highly condensed, stable and inactive complex. In Sepia officinalis (Common cuttlefish), this protein is Spermatid-specific protein T2.